The chain runs to 333 residues: FAD-dependent monooxygenase pytG (333 aa).

A helical transmembrane segment spans residues Leu-6 to Phe-26. The FAD site is built by Glu-38 and Arg-109. N-linked (GlcNAc...) asparagine glycosylation is present at Asn-303.

Belongs to the paxM FAD-dependent monooxygenase family. It depends on FAD as a cofactor.

The protein resides in the membrane. The protein operates within secondary metabolite biosynthesis. In terms of biological role, FAD-dependent monooxygenase; part of the gene cluster that mediates the biosynthesis of pyranterreones, a family of antioxidative compounds. The first step of pyranonigrins biosynthesis is performed by the hybrid PKS-NRPS synthetase pytA that condenses 4 malonyl-CoA units ato the acetyl starter unit by the modular PKS of pytA. The acyl chain is then connected to an L-serine through the amide bond by the modular NRPS of pytA. A tetramic acid is formed and released from the PKS-NRPS pytA to give pyranterreone 5 with the help of the thioesterase pytI. Pyranterreone 5 could be methylated by pytC to afford pyranterreone 6. Both pyranterreones 5 and 6 are subsequently oxidized by the FAD-linked oxidoreductase pytB and the cytochrome P450 monooxygenase pytD to form the fused gamma-pyrone core, resulting in pyranterreones 7 and 11, respectively. The hydroxy group at C-8 of pyranterreones 7 and 11 are dehydrated by the aspartyl protease pytH to form a delta-7 double bond to give pyranterreones 3 and 1, 2 accordingly. The exo-methylene of pyranterreone 3 could be reduced into a pendant methyl by reductase pytE to provide pyranterreone 4, also known as cordylactam. Pyranterreone 4 can be reconverted to pyranterreone 3 through pytB-catalyzed dehydrogenation or further oxidized to pyranterreones 9 and 10. In Aspergillus terreus (strain NIH 2624 / FGSC A1156), this protein is FAD-dependent monooxygenase pytG.